Reading from the N-terminus, the 429-residue chain is Palmitoyltransferase SWF1 (429 aa).

At 1–3 (MGT) the chain is on the lumenal side. A helical transmembrane segment spans residues 4 to 24 (IAIIAAVILGISFMTFVAFFG). Topologically, residues 25 to 79 (RLPALRNTPISFLHRLIWIHLPNGILTVDRTLTNGRLTTSLTRLGRHLWYDQHPT) are cytoplasmic. Residues 80 to 100 (ILIFFFLLLSVGEYLYLPVAW) form a helical membrane-spanning segment. Over 101–112 (PHFSFTHKFFGT) the chain is Lumenal. The chain crosses the membrane as a helical span at residues 113 to 133 (IAILCPYIFLYLSAYTDPGVI). The Cytoplasmic portion of the chain corresponds to 134-201 (NAKTHVREMA…CVGANNQRWF (68 aa)). The DHHC domain occupies 156–206 (TSCETCHLLKPARSKHCSICKKCVGRMDHHCIFINNCVGANNQRWFILLLL). Residues 202-222 (ILLLLSTAILTLYGGVLGLVI) traverse the membrane as a helical segment. Topologically, residues 223-274 (IRAKIQARFPYWTLMPWWTSTQAWNSGDLDFHRWLLLWSWGLQSGVAMGGVT) are lumenal. Residues 275 to 295 (LLALLTTPLVWGLLGYHLWLV) traverse the membrane as a helical segment. Topologically, residues 296 to 429 (YCGTTTNESM…ERGRNRRRSS (134 aa)) are cytoplasmic. A compositionally biased stretch (basic and acidic residues) spans 408–421 (GRSPVDEREFGRER). The segment at 408 to 429 (GRSPVDEREFGRERGRNRRRSS) is disordered.

It belongs to the DHHC palmitoyltransferase family. SWF1 subfamily.

It localises to the endoplasmic reticulum membrane. The enzyme catalyses L-cysteinyl-[protein] + hexadecanoyl-CoA = S-hexadecanoyl-L-cysteinyl-[protein] + CoA. Its function is as follows. Palmitoyltransferase that targets several endosomal SNAREs. Palmitoylates the SNAREs at cysteine residues close to the cytoplasmic end of their transmembrane domain. May have a role in the cellular quality control of transmembrane domain-containing proteins. The protein is Palmitoyltransferase SWF1 (swf-1) of Neurospora crassa (strain ATCC 24698 / 74-OR23-1A / CBS 708.71 / DSM 1257 / FGSC 987).